We begin with the raw amino-acid sequence, 374 residues long: Chaperone protein DnaJ (374 aa).

The region spanning 4 to 69 (SYYEILEITQ…EKRAIYDRYG (66 aa)) is the J domain. Residues 136 to 213 (GCKKNIDFTY…CKGLGYNESK (78 aa)) form a CR-type zinc finger. Residues C149, C152, C165, C168, C187, C190, C201, and C204 each contribute to the Zn(2+) site. 4 CXXCXGXG motif repeats span residues 149 to 156 (CKTCNGTG), 165 to 172 (CPKCQGRG), 187 to 194 (CPDCQGSG), and 201 to 208 (CNDCKGLG).

Belongs to the DnaJ family. In terms of assembly, homodimer. It depends on Zn(2+) as a cofactor.

It is found in the cytoplasm. Participates actively in the response to hyperosmotic and heat shock by preventing the aggregation of stress-denatured proteins and by disaggregating proteins, also in an autonomous, DnaK-independent fashion. Unfolded proteins bind initially to DnaJ; upon interaction with the DnaJ-bound protein, DnaK hydrolyzes its bound ATP, resulting in the formation of a stable complex. GrpE releases ADP from DnaK; ATP binding to DnaK triggers the release of the substrate protein, thus completing the reaction cycle. Several rounds of ATP-dependent interactions between DnaJ, DnaK and GrpE are required for fully efficient folding. Also involved, together with DnaK and GrpE, in the DNA replication of plasmids through activation of initiation proteins. The polypeptide is Chaperone protein DnaJ (Campylobacter jejuni subsp. doylei (strain ATCC BAA-1458 / RM4099 / 269.97)).